We begin with the raw amino-acid sequence, 880 residues long: Potassium transport protein 2 (880 aa).

N9 carries N-linked (GlcNAc...) asparagine glycosylation. The next 2 membrane-spanning stretches (helical) occupy residues 28 to 48 and 84 to 104; these read FVQD…LYGS and TILL…LTLF. A disordered region spans residues 157–182; it reads MHRPVAPETKAEEAEHQENEKHHRHH. Residues 165-177 are compositionally biased toward basic and acidic residues; it reads TKAEEAEHQENEK. N-linked (GlcNAc...) asparagine glycans are attached at residues N239, N283, N293, N294, N321, N443, and N460. Positions 289–315 are enriched in polar residues; it reads HHLDNNSSISSHNPSLETANDGNQETV. Residues 289-344 form a disordered region; sequence HHLDNNSSISSHNPSLETANDGNQETVSSSNSNYSTTRVDNDPHVASYSPQNSNFD. The span at 316-325 shows a compositional bias: low complexity; the sequence is SSSNSNYSTT. The next 6 helical transmembrane spans lie at 494 to 514, 571 to 591, 625 to 645, 684 to 704, 756 to 776, and 787 to 807; these read ILVV…LIFI, LIFL…WIMI, WVLF…FMVL, IAPA…YPIA, QLSH…IVEG, and FTLF…GLSL. A disordered region spans residues 857-880; it reads REEEDYMRRHGKKNTNRADPVPSS.

It belongs to the TrkH potassium transport family.

The protein localises to the cell membrane. In terms of biological role, together with TRK1, defines the major, high-affinity potassium influx transport system. Involved in maintenance of the proper sodium/potassium ratio in the cell and in regulating the plasma membrane potential. The sequence is that of Potassium transport protein 2 (trk2) from Schizosaccharomyces pombe (strain 972 / ATCC 24843) (Fission yeast).